A 204-amino-acid chain; its full sequence is MDPKDRKKIQFSVPAPPSQLDPRQVEMIRRRRPTPAMLFRLSEHSSPEEEASPHQRASGEGHHLKSKRPNPCAYTPPSLKAVQRIAESHLQSISNLNENQASEEEDELGELRELGYPREEDEEEEEDDEEEEEEEDSQAEVLKVIRQSAGQKTTCGQGLEGPWERPPPLDESERDGGSEDQVEDPALSEPGEEPQRPSPSEPGT.

Met1 is subject to N-acetylmethionine. Residues 1–204 (MDPKDRKKIQ…QRPSPSEPGT (204 aa)) are disordered. Thr34 is modified (phosphothreonine; by PKA). The span at 41–63 (LSEHSSPEEEASPHQRASGEGHH) shows a compositional bias: basic and acidic residues. Residues Ser45 and Ser46 each carry the phosphoserine modification. Thr75 is subject to Phosphothreonine; by CDK5. Polar residues predominate over residues 89–100 (HLQSISNLNENQ). Ser102 carries the post-translational modification Phosphoserine. The segment covering 109–118 (GELRELGYPR) has biased composition (basic and acidic residues). 2 stretches are compositionally biased toward acidic residues: residues 119-138 (EEDEEEEEDDEEEEEEEDSQ) and 170-183 (DESERDGGSEDQVE). At Ser137 the chain carries Phosphoserine. At Ser198 the chain carries Phosphoserine.

It belongs to the protein phosphatase inhibitor 1 family. Post-translationally, dopamine- and cyclic AMP-regulated neuronal phosphoprotein. In terms of processing, phosphorylation of Thr-34 is required for activity.

It localises to the cytoplasm. In terms of biological role, inhibitor of protein-phosphatase 1. This is Protein phosphatase 1 regulatory subunit 1B (PPP1R1B) from Homo sapiens (Human).